Here is a 301-residue protein sequence, read N- to C-terminus: Ornithine carbamoyltransferase (301 aa).

Residues 53–56, Gln-80, Arg-104, and 131–134 each bind carbamoyl phosphate; these read STRT and HPCQ. Residues Asn-162, Asp-221, and 225-226 contribute to the L-ornithine site; that span reads SI. Residues 260-261 and Arg-288 contribute to the carbamoyl phosphate site; that span reads CL.

It belongs to the aspartate/ornithine carbamoyltransferase superfamily. OTCase family.

Its subcellular location is the cytoplasm. The catalysed reaction is carbamoyl phosphate + L-ornithine = L-citrulline + phosphate + H(+). It functions in the pathway amino-acid biosynthesis; L-arginine biosynthesis; L-arginine from L-ornithine and carbamoyl phosphate: step 1/3. Functionally, reversibly catalyzes the transfer of the carbamoyl group from carbamoyl phosphate (CP) to the N(epsilon) atom of ornithine (ORN) to produce L-citrulline. In Cenarchaeum symbiosum (strain A), this protein is Ornithine carbamoyltransferase.